A 207-amino-acid polypeptide reads, in one-letter code: Small ribosomal subunit protein uS4 (207 aa).

The disordered stretch occupies residues 35-54 (RPKPPGPQLGRPRRLSDRGQ). The region spanning 97-163 (RRLDNVLFRL…AYFKTLAENI (67 aa)) is the S4 RNA-binding domain.

Belongs to the universal ribosomal protein uS4 family. As to quaternary structure, part of the 30S ribosomal subunit. Contacts protein S5. The interaction surface between S4 and S5 is involved in control of translational fidelity.

One of the primary rRNA binding proteins, it binds directly to 16S rRNA where it nucleates assembly of the body of the 30S subunit. In terms of biological role, with S5 and S12 plays an important role in translational accuracy. This chain is Small ribosomal subunit protein uS4, found in Dehalococcoides mccartyi (strain CBDB1).